The primary structure comprises 274 residues: Large ribosomal subunit protein uL2cz/uL2cy (274 aa).

Disordered stretches follow at residues 1–21 (MAIH…VDSQ) and 224–274 (NPVD…RRSK).

Belongs to the universal ribosomal protein uL2 family. In terms of assembly, part of the 50S ribosomal subunit.

The protein resides in the plastid. Its subcellular location is the chloroplast. This chain is Large ribosomal subunit protein uL2cz/uL2cy (rpl2-A), found in Populus trichocarpa (Western balsam poplar).